Here is a 415-residue protein sequence, read N- to C-terminus: Serine/threonine transporter SstT (415 aa).

Transmembrane regions (helical) follow at residues 23 to 43 (ILVG…AAIA), 47 to 67 (LGTL…LMLV), 85 to 105 (ILWL…LFSF), 144 to 164 (ALLK…GFAL), 181 to 201 (AVTF…FGLV), 220 to 240 (LMVL…LIVF), 303 to 323 (GAAI…GIAV), and 333 to 353 (VVAS…LLLI).

It belongs to the dicarboxylate/amino acid:cation symporter (DAACS) (TC 2.A.23) family.

The protein localises to the cell inner membrane. It catalyses the reaction L-serine(in) + Na(+)(in) = L-serine(out) + Na(+)(out). The enzyme catalyses L-threonine(in) + Na(+)(in) = L-threonine(out) + Na(+)(out). Functionally, involved in the import of serine and threonine into the cell, with the concomitant import of sodium (symport system). This Cronobacter sakazakii (strain ATCC BAA-894) (Enterobacter sakazakii) protein is Serine/threonine transporter SstT.